The sequence spans 414 residues: Sec-independent protein translocase protein TatC (414 aa).

The tract at residues 1-21 is disordered; it reads MTQSTSVSKGGRVSRKAKKNP. 6 consecutive transmembrane segments (helical) span residues 45–65, 119–139, 157–177, 200–220, 238–258, and 259–279; these read IAVTTIIGFIWYEHGIPAWAI, GGLAGLVMACPIWLIEIWRFI, IAGFLFVLGVVAAYLVLPMGL, FVIALILVFGLSFEVPLFTAM, IMIVVIFIFAAIATPGQDPIS, and MLVLALTLVVLMELALQFTRI. A disordered region spans residues 315–414; sequence IYDGDHKGIA…IQSSSFDDVL (100 aa). Residues 323–336 show a composition bias toward gly residues; it reads IAGGGDAHPAGGSG. Residues 345–357 show a composition bias toward low complexity; that stretch reads TAPTRAPSASESP. Over residues 403–414 the composition is skewed to polar residues; that stretch reads DTIQSSSFDDVL.

The protein belongs to the TatC family. As to quaternary structure, the Tat system comprises two distinct complexes: a TatABC complex, containing multiple copies of TatA, TatB and TatC subunits, and a separate TatA complex, containing only TatA subunits. Substrates initially bind to the TatABC complex, which probably triggers association of the separate TatA complex to form the active translocon.

The protein localises to the cell membrane. Functionally, part of the twin-arginine translocation (Tat) system that transports large folded proteins containing a characteristic twin-arginine motif in their signal peptide across membranes. Together with TatB, TatC is part of a receptor directly interacting with Tat signal peptides. This chain is Sec-independent protein translocase protein TatC, found in Corynebacterium kroppenstedtii (strain DSM 44385 / JCM 11950 / CIP 105744 / CCUG 35717).